Reading from the N-terminus, the 106-residue chain is uncharacterized protein (106 aa).

A signal peptide spans 1–25 (MSVIKKNIPAIGLCICAFFIHSAVG).

To the N-terminal of the FimA/PapA family of fimbria proteins.

This is an uncharacterized protein from Salmonella typhi.